The sequence spans 71 residues: MIRNLPEGTKAALRVRAARHHHSVEAEARAILTAGLLGEEVPMPVLLAADSGHDIDFEPERLGLIARTPQL.

Its function is as follows. Putative antitoxin component of a possible type II toxin-antitoxin (TA) system. The cognate toxin is VapB14. The chain is Putative antitoxin VapB14 (vapB14) from Mycobacterium tuberculosis (strain ATCC 25618 / H37Rv).